We begin with the raw amino-acid sequence, 116 residues long: Iron-sulfur cluster insertion protein ErpA (116 aa).

C44, C108, and C110 together coordinate iron-sulfur cluster.

It belongs to the HesB/IscA family. In terms of assembly, homodimer. Iron-sulfur cluster is required as a cofactor.

In terms of biological role, required for insertion of 4Fe-4S clusters for at least IspG. This is Iron-sulfur cluster insertion protein ErpA from Aeromonas salmonicida (strain A449).